The following is a 69-amino-acid chain: Cell division protein ZapB (69 aa).

Positions 3-60 (LELFNQLEQKVQNAVETIEMLKMEAEELREENTRLKQERDEWERRLNGLLGKFQEIED) form a coiled coil.

The protein belongs to the ZapB family. As to quaternary structure, homodimer. The ends of the coiled-coil dimer bind to each other, forming polymers. Interacts with FtsZ.

The protein resides in the cytoplasm. Functionally, non-essential, abundant cell division factor that is required for proper Z-ring formation. It is recruited early to the divisome by direct interaction with FtsZ, stimulating Z-ring assembly and thereby promoting cell division earlier in the cell cycle. Its recruitment to the Z-ring requires functional FtsA or ZipA. The polypeptide is Cell division protein ZapB (Chromohalobacter salexigens (strain ATCC BAA-138 / DSM 3043 / CIP 106854 / NCIMB 13768 / 1H11)).